Reading from the N-terminus, the 124-residue chain is Large ribosomal subunit protein bL12 (124 aa).

It belongs to the bacterial ribosomal protein bL12 family. Homodimer. Part of the ribosomal stalk of the 50S ribosomal subunit. Forms a multimeric L10(L12)X complex, where L10 forms an elongated spine to which 2 to 4 L12 dimers bind in a sequential fashion. Binds GTP-bound translation factors.

Its function is as follows. Forms part of the ribosomal stalk which helps the ribosome interact with GTP-bound translation factors. Is thus essential for accurate translation. The chain is Large ribosomal subunit protein bL12 from Idiomarina loihiensis (strain ATCC BAA-735 / DSM 15497 / L2-TR).